We begin with the raw amino-acid sequence, 206 residues long: MLTIAMPKGRIFGEALELLRKAGYTLPPEFAESRKLMIEVPEENMRFILAKPMDVVTYVEHGVADLGIAGKDVMMEEERDVYELLDLKISKCHLAVAGLPGVRMNQIAPRVATKYPNIASSYFREQGEQVEIIRLNGSIELAPLIGLADRIVDIVSTGRTLKENGLVELEKIADVTSRLIVNPVSYRMKDEAVDELVHRLSEVIPQ.

Belongs to the ATP phosphoribosyltransferase family. Short subfamily. As to quaternary structure, heteromultimer composed of HisG and HisZ subunits.

It is found in the cytoplasm. The catalysed reaction is 1-(5-phospho-beta-D-ribosyl)-ATP + diphosphate = 5-phospho-alpha-D-ribose 1-diphosphate + ATP. It participates in amino-acid biosynthesis; L-histidine biosynthesis; L-histidine from 5-phospho-alpha-D-ribose 1-diphosphate: step 1/9. Catalyzes the condensation of ATP and 5-phosphoribose 1-diphosphate to form N'-(5'-phosphoribosyl)-ATP (PR-ATP). Has a crucial role in the pathway because the rate of histidine biosynthesis seems to be controlled primarily by regulation of HisG enzymatic activity. The chain is ATP phosphoribosyltransferase from Geobacillus sp. (strain WCH70).